The following is a 571-amino-acid chain: Polypeptide N-acetylgalactosaminyltransferase 2 (571 aa).

At 1–6 (MRRRSR) the chain is on the cytoplasmic side. The chain crosses the membrane as a helical; Signal-anchor for type II membrane protein span at residues 7 to 24 (MLLCFAFLWVLGIAYYMY). Residues 25-571 (SGGGSALAGG…QWKFTLNLQQ (547 aa)) are Lumenal-facing. Ser29 carries an O-linked (Xyl...) (chondroitin sulfate) serine glycan. Residues 53–66 (KKDLHHSNGEEKAQ) show a composition bias toward basic and acidic residues. The disordered stretch occupies residues 53-74 (KKDLHHSNGEEKAQSMETLPPG). Disulfide bonds link Cys126–Cys354, Cys345–Cys423, Cys456–Cys473, and Cys496–Cys513. The interval 135–240 (LPATSVVITF…EHWLEPLLER (106 aa)) is catalytic subdomain A. The substrate site is built by Thr143, Asp176, and Arg201. Asp224 provides a ligand contact to Mn(2+). Ser225 contacts substrate. Residue His226 coordinates Mn(2+). The interval 300 to 362 (PIKTPMIAGG…PCSRVGHVFR (63 aa)) is catalytic subdomain B. Trp331 contacts substrate. Residue His359 coordinates Mn(2+). Substrate contacts are provided by Arg362, His365, and Tyr367. Residues 443–566 (QDIAFGALQQ…PALSQQWKFT (124 aa)) form the Ricin B-type lectin domain. Position 536 is a phosphoserine (Ser536). The cysteines at positions 539 and 555 are disulfide-linked.

It belongs to the glycosyltransferase 2 family. GalNAc-T subfamily. It depends on Mn(2+) as a cofactor. Detected in urine (at protein level). Widely expressed.

The protein resides in the golgi apparatus. It is found in the golgi stack membrane. Its subcellular location is the secreted. The enzyme catalyses L-seryl-[protein] + UDP-N-acetyl-alpha-D-galactosamine = a 3-O-[N-acetyl-alpha-D-galactosaminyl]-L-seryl-[protein] + UDP + H(+). It catalyses the reaction L-threonyl-[protein] + UDP-N-acetyl-alpha-D-galactosamine = a 3-O-[N-acetyl-alpha-D-galactosaminyl]-L-threonyl-[protein] + UDP + H(+). It participates in protein modification; protein glycosylation. Its function is as follows. Catalyzes the initial reaction in O-linked oligosaccharide biosynthesis, the transfer of an N-acetyl-D-galactosamine residue to a serine or threonine residue on the protein receptor. Has a broad spectrum of substrates for peptides such as EA2, Muc5AC, Muc1a, Muc1b. Probably involved in O-linked glycosylation of the immunoglobulin A1 (IgA1) hinge region. Involved in O-linked glycosylation of APOC-III, ANGPTL3 and PLTP. It participates in the regulation of HDL-C metabolism. This is Polypeptide N-acetylgalactosaminyltransferase 2 (GALNT2) from Homo sapiens (Human).